The following is a 106-amino-acid chain: Large ribosomal subunit protein eL42A (106 aa).

Residue lysine 40 is modified to N6-methyllysine; by RKM3. An N6-methyllysine; by RKM4 modification is found at lysine 55.

Belongs to the eukaryotic ribosomal protein eL42 family. Component of the large ribosomal subunit (LSU). Mature yeast ribosomes consist of a small (40S) and a large (60S) subunit. The 40S small subunit contains 1 molecule of ribosomal RNA (18S rRNA) and 33 different proteins (encoded by 57 genes). The large 60S subunit contains 3 rRNA molecules (25S, 5.8S and 5S rRNA) and 46 different proteins (encoded by 81 genes). Post-translationally, in wild-type cells, 78% of L42 is monomethylated at both Lys-40 and Lys-55, and 22% are a mixture of species with either residue monomethylated.

The protein localises to the cytoplasm. Functionally, component of the ribosome, a large ribonucleoprotein complex responsible for the synthesis of proteins in the cell. The small ribosomal subunit (SSU) binds messenger RNAs (mRNAs) and translates the encoded message by selecting cognate aminoacyl-transfer RNA (tRNA) molecules. The large subunit (LSU) contains the ribosomal catalytic site termed the peptidyl transferase center (PTC), which catalyzes the formation of peptide bonds, thereby polymerizing the amino acids delivered by tRNAs into a polypeptide chain. The nascent polypeptides leave the ribosome through a tunnel in the LSU and interact with protein factors that function in enzymatic processing, targeting, and the membrane insertion of nascent chains at the exit of the ribosomal tunnel. The chain is Large ribosomal subunit protein eL42A from Saccharomyces cerevisiae (strain ATCC 204508 / S288c) (Baker's yeast).